Consider the following 684-residue polypeptide: Glycine--tRNA ligase beta subunit (684 aa).

It belongs to the class-II aminoacyl-tRNA synthetase family. In terms of assembly, tetramer of two alpha and two beta subunits.

It is found in the cytoplasm. It carries out the reaction tRNA(Gly) + glycine + ATP = glycyl-tRNA(Gly) + AMP + diphosphate. This Pseudomonas fluorescens (strain Pf0-1) protein is Glycine--tRNA ligase beta subunit.